The sequence spans 426 residues: MSTSSKPRKFTAPKGVPDYVPPNSHEFNAVRSTFHHCATVAGYEPVELPIFEDTSLFARGVGESSDVVTKEMYTFEDRGGRSMTLRPEGTAGVMRAVIEHGLDRGQLPAKLVYAGPCFRYERPQAGRYRQFQQVGVEAIGVDDPALDAEVIALAYRCFTSLGLMGFRLELTSLGDSTCRPAYREKLQAFLTSLPLDEETQHRAQINPLRVLDDKRPEVKEMTADAPLMLDYLSDEARAHFETVTGILDDLSVPYTINPRMVRGLDYYTKTCFEFVHDDLGAQSGIGGGGRYDGLMAELGGRDLSGVGFGLGVERALLALETEKKTVTDGSRVEVYGVAMGEEAHRRMPVIINDLRQSGVRADMSYGHRGLKGSMKAADRAGARFALVIGEDELAKSIVQVKDLHEGEQTAVPLDQVVQEVRGRLSA.

Belongs to the class-II aminoacyl-tRNA synthetase family. Homodimer.

The protein resides in the cytoplasm. It carries out the reaction tRNA(His) + L-histidine + ATP = L-histidyl-tRNA(His) + AMP + diphosphate + H(+). This Corynebacterium kroppenstedtii (strain DSM 44385 / JCM 11950 / CIP 105744 / CCUG 35717) protein is Histidine--tRNA ligase.